The sequence spans 520 residues: MSNPALQVYGGDEINAIVIDPGSFVTNIGYSGTDCPQSIMPSSYGNVETDGDTKRIFNEQPLLFPRAGMEIKPIVENSTIVDWDRAQEQWEYALNTDLKFESNKGTPVLLTEPIWNSEASRKKSLEILLESMEFEACYLAANSSAVSFAMGRPTCLVVDIGHDVSTVSPVIDGMTLSKSSTRNYVAGKYLNHLIAKNLKPREIVPIFQVLKKKPDFVKRTLSFDVNESVINFANERQFFQEFKETLLHIAPKSLSSFKDELATQTKRSLEAPWGEELIFDADTRYSFAEQLFRPVKEDFPEGWPASTDGIVKTWHNDYVPLKRTKPGTSTNTKEKENTAESTPVPASTEQEAVDSPSQEPNENGKRPVENKEDSSNNEQNSNEIKNEDANSNESSAKATVPSNGIQAKGEDEVAGIVDLINKSMMEADVDLRATLAHNVVLTGGTSKIPGLSDRIMHELNKSLPALKFRMLSSGHLRERQYQGWLGGSILASLGTFHQLWVGREEYEEVGPERLLKDRFR.

The tract at residues 320 to 406 is disordered; that stretch reads PLKRTKPGTS…KATVPSNGIQ (87 aa). The span at 339 to 361 shows a compositional bias: polar residues; sequence AESTPVPASTEQEAVDSPSQEPN. Basic and acidic residues predominate over residues 362 to 374; it reads ENGKRPVENKEDS. Polar residues predominate over residues 389–405; it reads ANSNESSAKATVPSNGI.

Belongs to the actin family. ARP4 subfamily. As to quaternary structure, component of the NuA4 histone acetyltransferase complex, of the INO80 chromatin remodeling complex, and of the SWR1 chromatin remodeling complex.

Its subcellular location is the nucleus. Functionally, chromatin interaction component of the NuA4 histone acetyltransferase complex which is involved in transcriptional activation of selected genes principally by acetylation of nucleosomal histone H4 and H2A. The NuA4 complex is also involved in DNA repair. Is required for NuA4 complex integrity. Component of the SWR1 complex which mediates the ATP-dependent exchange of histone H2A for the H2A variant HZT1 leading to transcriptional regulation of selected genes by chromatin remodeling. Component of the INO80 complex which remodels chromatin by shifting nucleosomes and is involved in DNA repair. In Kluyveromyces lactis (strain ATCC 8585 / CBS 2359 / DSM 70799 / NBRC 1267 / NRRL Y-1140 / WM37) (Yeast), this protein is Actin-related protein 4 (ARP4).